We begin with the raw amino-acid sequence, 187 residues long: Early E3 20.6 kDa glycoprotein (187 aa).

N-linked (GlcNAc...) asparagine; by host glycans are attached at residues N30, N73, N117, N134, and N135.

Belongs to the adenoviridae E3_20 family.

In Human adenovirus B serotype 35 (HAdV-35), this protein is Early E3 20.6 kDa glycoprotein.